The sequence spans 673 residues: Zinc finger protein 16 (673 aa).

Residues 1–10 (MPSLRTRREE) are compositionally biased toward basic and acidic residues. Positions 1–42 (MPSLRTRREEAEMELSAPGPSPWTPAPQARVSDAPAVTHPGS) are disordered. Residues 62–210 (YQQPDCDTRT…GVPTAESPLI (149 aa)) are necessary for transcription activation. The C2H2-type 1; degenerate zinc-finger motif lies at 209 to 231 (LICNECGKTFRGNPDLIQRQIVH). Residues 237–259 (FMCDDCGKTFSQNSVLKNRHXSH) form a C2H2-type 2; degenerate zinc finger. A Glycyl lysine isopeptide (Lys-Gly) (interchain with G-Cter in SUMO2) cross-link involves residue K253. C2H2-type zinc fingers lie at residues 284–306 (YTCT…QKSH), 312–334 (YECN…QRIH), 340–362 (YVCS…HRTH), 368–390 (FECG…QRVH), 396–418 (YECN…HRVH), 424–446 (YKCS…RRIH), and 452–474 (HVCN…QIIH). Residues 332 to 364 (RIHSGEKPYVCSECGKAFRRSSNLIKHHRTHTG) form a required for nuclear localization region. The interval 464–494 (SSVLRKHQIIHTGEKPYRCSVCGKAFSHSSA) is required for nuclear localization. K478 bears the N6-acetyllysine mark. 7 C2H2-type zinc fingers span residues 480 to 502 (YRCS…QGVH), 508 to 530 (YACH…QRVH), 536 to 558 (YECT…QRIH), 564 to 586 (HECN…QKVH), 592 to 614 (YTCV…QIIH), 620 to 642 (YKCS…QRIH), and 648 to 670 (YDCA…QLIH).

The protein belongs to the krueppel C2H2-type zinc-finger protein family. As to quaternary structure, interacts with INCA1; the interaction inhibits INCA1 activity and induces the cell cycle process.

It is found in the nucleus. Functionally, acts as a transcriptional activator. Promotes cell proliferation by facilitating the cell cycle phase transition from the S to G2/M phase. Involved in both the hemin- and phorbol myristate acetate (PMA)-induced erythroid and megakaryocytic differentiation, respectively. Also plays a role as an inhibitor of cell apoptosis. The polypeptide is Zinc finger protein 16 (ZNF16) (Pan paniscus (Pygmy chimpanzee)).